Here is a 556-residue protein sequence, read N- to C-terminus: 2-succinyl-5-enolpyruvyl-6-hydroxy-3-cyclohexene-1-carboxylate synthase (556 aa).

Belongs to the TPP enzyme family. MenD subfamily. As to quaternary structure, homodimer. The cofactor is Mg(2+). Mn(2+) serves as cofactor. Requires thiamine diphosphate as cofactor.

The catalysed reaction is isochorismate + 2-oxoglutarate + H(+) = 5-enolpyruvoyl-6-hydroxy-2-succinyl-cyclohex-3-ene-1-carboxylate + CO2. Its pathway is quinol/quinone metabolism; 1,4-dihydroxy-2-naphthoate biosynthesis; 1,4-dihydroxy-2-naphthoate from chorismate: step 2/7. It participates in quinol/quinone metabolism; menaquinone biosynthesis. Functionally, catalyzes the thiamine diphosphate-dependent decarboxylation of 2-oxoglutarate and the subsequent addition of the resulting succinic semialdehyde-thiamine pyrophosphate anion to isochorismate to yield 2-succinyl-5-enolpyruvyl-6-hydroxy-3-cyclohexene-1-carboxylate (SEPHCHC). This is 2-succinyl-5-enolpyruvyl-6-hydroxy-3-cyclohexene-1-carboxylate synthase from Escherichia fergusonii (strain ATCC 35469 / DSM 13698 / CCUG 18766 / IAM 14443 / JCM 21226 / LMG 7866 / NBRC 102419 / NCTC 12128 / CDC 0568-73).